Reading from the N-terminus, the 328-residue chain is tRNA uridine(34) hydroxylase (328 aa).

The Rhodanese domain occupies 130–224 (LDKDTVVLDT…YGKDPEVQGE (95 aa)). The active-site Cysteine persulfide intermediate is the cysteine 184.

This sequence belongs to the TrhO family.

It carries out the reaction uridine(34) in tRNA + AH2 + O2 = 5-hydroxyuridine(34) in tRNA + A + H2O. In terms of biological role, catalyzes oxygen-dependent 5-hydroxyuridine (ho5U) modification at position 34 in tRNAs. This chain is tRNA uridine(34) hydroxylase, found in Streptococcus pneumoniae serotype 19F (strain G54).